Consider the following 401-residue polypeptide: Argininosuccinate synthase (401 aa).

Residue 9–17 coordinates ATP; that stretch reads AYSGGLDTS. Residue tyrosine 86 participates in L-citrulline binding. Residue glycine 116 participates in ATP binding. 3 residues coordinate L-aspartate: threonine 118, asparagine 122, and aspartate 123. Residue asparagine 122 coordinates L-citrulline. Arginine 126, serine 174, serine 183, glutamate 259, and tyrosine 271 together coordinate L-citrulline.

This sequence belongs to the argininosuccinate synthase family. Type 1 subfamily. As to quaternary structure, homotetramer.

It is found in the cytoplasm. The enzyme catalyses L-citrulline + L-aspartate + ATP = 2-(N(omega)-L-arginino)succinate + AMP + diphosphate + H(+). The protein operates within amino-acid biosynthesis; L-arginine biosynthesis; L-arginine from L-ornithine and carbamoyl phosphate: step 2/3. The chain is Argininosuccinate synthase from Bacillus thuringiensis (strain Al Hakam).